We begin with the raw amino-acid sequence, 466 residues long: Soluble pyridine nucleotide transhydrogenase (466 aa).

36 to 45 lines the FAD pocket; that stretch reads ERYQNVGGGC.

Belongs to the class-I pyridine nucleotide-disulfide oxidoreductase family. FAD is required as a cofactor.

It is found in the cytoplasm. It catalyses the reaction NAD(+) + NADPH = NADH + NADP(+). Functionally, conversion of NADPH, generated by peripheral catabolic pathways, to NADH, which can enter the respiratory chain for energy generation. This Escherichia coli O6:K15:H31 (strain 536 / UPEC) protein is Soluble pyridine nucleotide transhydrogenase.